We begin with the raw amino-acid sequence, 450 residues long: V-type proton ATPase subunit H (450 aa).

This sequence belongs to the V-ATPase H subunit family. In terms of assembly, V-ATPase is a heteromultimeric enzyme composed of a peripheral catalytic V1 complex (components A to H) attached to an integral membrane V0 proton pore complex (components: a, c, c', c'', d, e, f and VOA1).

Its subcellular location is the vacuole membrane. Functionally, subunit of the V1 complex of vacuolar(H+)-ATPase (V-ATPase), a multisubunit enzyme composed of a peripheral complex (V1) that hydrolyzes ATP and a membrane integral complex (V0) that translocates protons. V-ATPase is responsible for acidifying and maintaining the pH of intracellular compartments. This subunit is essential for activity, but not assembly, of the enzyme complex. This subunit is also required for silencing the ATPase activity of V-ATPase when V1 is detached from V0. This is V-type proton ATPase subunit H (vma13) from Schizosaccharomyces pombe (strain 972 / ATCC 24843) (Fission yeast).